The chain runs to 366 residues: Endophilin-A (366 aa).

A BAR domain is found at 18 to 248; sequence TEKMGGAEGT…LQEKRSEAES (231 aa). Positions 227–247 form a coiled coil; that stretch reads QCADVLRGLQETLQEKRSEAE. The tract at residues 266–295 is disordered; it reads GGGGGLNEDGTPSHISSSASPLPSPMRSPA. Low complexity predominate over residues 277–294; it reads PSHISSSASPLPSPMRSP. An SH3 domain is found at 305-364; it reads QQQPCCQALYDFDPENPGELGFKENDIITLLNRVDDNWYEGSVNGRTGYFPQSYVQVQVP.

This sequence belongs to the endophilin family.

It localises to the cytoplasm. The protein resides in the membrane. Required presynaptically at the neuromuscular junction. Implicated in synaptic vesicle endocytosis. The sequence is that of Endophilin-A from Drosophila willistoni (Fruit fly).